The sequence spans 390 residues: Cyclic amide hydrolase (390 aa).

The RU A stretch occupies residues 1 to 118 (MPNPEASLSP…TVVTQEWVAD (118 aa)). Substrate-binding positions include R66 and 97 to 98 (SG). The segment at 127–268 (GLVVGRGHTE…GEVLLLANSA (142 aa)) is RU B. K177 is a catalytic residue. Substrate is bound by residues N213, 251–252 (SS), K346, and 365–366 (SG). The active-site Nucleophile is S251. Residues 274–390 (LRIGHGITRD…VAAVVRRLPA (117 aa)) are RU C.

This sequence belongs to the cyclic amide hydrolase (CyAH) family. In terms of assembly, homotetramer; disulfide-linked. The disulfide forms between 2 monomers in the tetramer, such that each tetramer contains 2 sets of vicinal disulfides.

Cyclic amide hydrolase of unknown substrate specificity. Catalyzes the hydrolytic ring-opening of a cyclic amide. Does not act on cyanuric acid nor barbituric acid. The chain is Cyclic amide hydrolase from Pseudofrankia inefficax (strain DSM 45817 / CECT 9037 / DDB 130130 / EuI1c) (Frankia inefficax).